The sequence spans 288 residues: Probable endonuclease 4 (288 aa).

Zn(2+) is bound by residues His75, His115, Glu153, Asp187, His190, His224, Asp237, His239, and Glu269.

Belongs to the AP endonuclease 2 family. Requires Zn(2+) as cofactor.

The enzyme catalyses Endonucleolytic cleavage to 5'-phosphooligonucleotide end-products.. Its function is as follows. Endonuclease IV plays a role in DNA repair. It cleaves phosphodiester bonds at apurinic or apyrimidinic (AP) sites, generating a 3'-hydroxyl group and a 5'-terminal sugar phosphate. The sequence is that of Probable endonuclease 4 from Chlamydia trachomatis serovar A (strain ATCC VR-571B / DSM 19440 / HAR-13).